We begin with the raw amino-acid sequence, 260 residues long: Putative protein phosphatase (260 aa).

In terms of domain architecture, PPM-type phosphatase spans 9–254 (FTGLSKKGPV…DNITAALVNL (246 aa)).

It catalyses the reaction O-phospho-L-seryl-[protein] + H2O = L-seryl-[protein] + phosphate. The enzyme catalyses O-phospho-L-threonyl-[protein] + H2O = L-threonyl-[protein] + phosphate. This chain is Putative protein phosphatase, found in Mycoplasma genitalium (strain ATCC 33530 / DSM 19775 / NCTC 10195 / G37) (Mycoplasmoides genitalium).